A 533-amino-acid polypeptide reads, in one-letter code: Glucose-6-phosphate isomerase (533 aa).

The active-site Proton donor is the glutamate 330. Active-site residues include histidine 359 and lysine 461.

The protein belongs to the GPI family.

The protein localises to the cytoplasm. The catalysed reaction is alpha-D-glucose 6-phosphate = beta-D-fructose 6-phosphate. The protein operates within carbohydrate biosynthesis; gluconeogenesis. It functions in the pathway carbohydrate degradation; glycolysis; D-glyceraldehyde 3-phosphate and glycerone phosphate from D-glucose: step 2/4. Its function is as follows. Catalyzes the reversible isomerization of glucose-6-phosphate to fructose-6-phosphate. This chain is Glucose-6-phosphate isomerase, found in Prochlorococcus marinus (strain SARG / CCMP1375 / SS120).